We begin with the raw amino-acid sequence, 620 residues long: Threonine--tRNA ligase (620 aa).

The TGS domain maps to 1-42 (MFEIAKGISNSLAKKSVGAKVDGKNVDMSYILDHDAEVEFID). The catalytic stretch occupies residues 224 to 515 (DHRKLGKELE…LIEHYAGAFP (292 aa)). Zn(2+) contacts are provided by cysteine 315, histidine 366, and histidine 492.

It belongs to the class-II aminoacyl-tRNA synthetase family. Homodimer. The cofactor is Zn(2+).

The protein localises to the cytoplasm. The enzyme catalyses tRNA(Thr) + L-threonine + ATP = L-threonyl-tRNA(Thr) + AMP + diphosphate + H(+). In terms of biological role, catalyzes the attachment of threonine to tRNA(Thr) in a two-step reaction: L-threonine is first activated by ATP to form Thr-AMP and then transferred to the acceptor end of tRNA(Thr). Also edits incorrectly charged L-seryl-tRNA(Thr). The sequence is that of Threonine--tRNA ligase from Fusobacterium nucleatum subsp. nucleatum (strain ATCC 25586 / DSM 15643 / BCRC 10681 / CIP 101130 / JCM 8532 / KCTC 2640 / LMG 13131 / VPI 4355).